A 449-amino-acid polypeptide reads, in one-letter code: UDP-N-acetylmuramoylalanine--D-glutamate ligase (449 aa).

ATP is bound at residue 118-124 (GTNGKTT).

The protein belongs to the MurCDEF family.

The protein localises to the cytoplasm. It carries out the reaction UDP-N-acetyl-alpha-D-muramoyl-L-alanine + D-glutamate + ATP = UDP-N-acetyl-alpha-D-muramoyl-L-alanyl-D-glutamate + ADP + phosphate + H(+). It functions in the pathway cell wall biogenesis; peptidoglycan biosynthesis. Cell wall formation. Catalyzes the addition of glutamate to the nucleotide precursor UDP-N-acetylmuramoyl-L-alanine (UMA). The polypeptide is UDP-N-acetylmuramoylalanine--D-glutamate ligase (Staphylococcus epidermidis (strain ATCC 35984 / DSM 28319 / BCRC 17069 / CCUG 31568 / BM 3577 / RP62A)).